A 334-amino-acid polypeptide reads, in one-letter code: Transcription factor MYB92 (334 aa).

HTH myb-type domains lie at 9 to 61 and 62 to 116; these read DSGL…TNYL and RPDI…KKKL. 2 DNA-binding regions (H-T-H motif) span residues 37–61 and 89–112; these read WRALPKLAGLNRCGKSCRLRWTNYL and WSTIANQLPGRTDNEIKNFWNTHL.

In terms of assembly, interacts with FBX5. Highly expressed in roots and at lower levels in stems, flowers and siliques.

The protein localises to the nucleus. In terms of biological role, probable transcription factor. This is Transcription factor MYB92 from Arabidopsis thaliana (Mouse-ear cress).